A 1435-amino-acid chain; its full sequence is Guanine nucleotide exchange factor LTE1 (1435 aa).

The region spanning 25–157 (VSKPVNSADL…SCIINLKKNW (133 aa)) is the N-terminal Ras-GEF domain. Residues 235 to 256 (KLQSSNSSKNQRSPSMLLFPDN) are disordered. Residues 237 to 249 (QSSNSSKNQRSPS) are compositionally biased toward low complexity. S271 is subject to Phosphoserine. Positions 338–365 (QSGTLQGTSTTSSLDNNSNSNSRSNTSS) are disordered. S559 is modified (phosphoserine). Residues 582-606 (KDNSSSRTDENGPQRLLFHETDKTN) show a composition bias toward basic and acidic residues. The interval 582–689 (KDNSSSRTDE…VRNIVNNTDS (108 aa)) is disordered. Residues 621–632 (SQSQKSMTSSPL) show a composition bias toward polar residues. The span at 654 to 667 (SITYSYDSELSSSS) shows a compositional bias: low complexity. S689 carries the phosphoserine modification. T691 is subject to Phosphothreonine. A compositionally biased stretch (basic and acidic residues) spans 723–744 (EKNYDNKENQESEYESTKKLDN). Residues 723 to 747 (EKNYDNKENQESEYESTKKLDNSLD) are disordered. A phosphoserine mark is found at S808 and S810. The tract at residues 851-871 (AQNSPLKQTQNPQREFPNGTS) is disordered. A phosphoserine mark is found at S1028 and S1109. The region spanning 1194 to 1434 (DSLSVAQQMT…LTQEEINELS (241 aa)) is the Ras-GEF domain.

Belongs to the LTE1 family. In terms of assembly, interacts with CDC24, CDC42, KEL1, KEL2, RAS2 and TEM1. Phosphorylated by CDC28 in a cell cycle-dependent manner and in response to nocodazole. Dephosphorylion by CDC14 triggers LTE1 release from bud cortex during the exit of mitosis.

It localises to the cytoplasm. Its subcellular location is the bud. GDP-GTP exchange factor for TEM1, a Ras-like protein, component of the mitotic exit network (MEN). Activation of TEM1 by LTE1 in the bud ultimately leads to activation of CDC15 followed by the release of CDC14 from the nucleolus, which then inactivates cyclin-dependent kinases (CDKs) activity by several mechanism. Required for TEM1 localization to the bud cortex during mitotic exit. Fine-tunes the timing of the mitotic exit and couples this event with cytokinesis. In terms of biological role, involved in proprotein-processing like proalpha factor-processing in the secretory pathway. This Saccharomyces cerevisiae (strain ATCC 204508 / S288c) (Baker's yeast) protein is Guanine nucleotide exchange factor LTE1 (LTE1).